A 172-amino-acid chain; its full sequence is Adenine phosphoribosyltransferase (172 aa).

This sequence belongs to the purine/pyrimidine phosphoribosyltransferase family. Homodimer.

The protein resides in the cytoplasm. It carries out the reaction AMP + diphosphate = 5-phospho-alpha-D-ribose 1-diphosphate + adenine. It functions in the pathway purine metabolism; AMP biosynthesis via salvage pathway; AMP from adenine: step 1/1. In terms of biological role, catalyzes a salvage reaction resulting in the formation of AMP, that is energically less costly than de novo synthesis. The sequence is that of Adenine phosphoribosyltransferase from Clostridium botulinum (strain Alaska E43 / Type E3).